Consider the following 346-residue polypeptide: Aspartate-semialdehyde dehydrogenase (346 aa).

Residues T10–G13 and R38–S39 contribute to the NADP(+) site. R98 is a binding site for phosphate. C131 acts as the Acyl-thioester intermediate in catalysis. Substrate is bound at residue Q158. S161–G162 is an NADP(+) binding site. K228 contacts phosphate. A substrate-binding site is contributed by R250. The active-site Proton acceptor is the H257. An NADP(+)-binding site is contributed by N326.

This sequence belongs to the aspartate-semialdehyde dehydrogenase family. In terms of assembly, homodimer.

It catalyses the reaction L-aspartate 4-semialdehyde + phosphate + NADP(+) = 4-phospho-L-aspartate + NADPH + H(+). The protein operates within amino-acid biosynthesis; L-lysine biosynthesis via DAP pathway; (S)-tetrahydrodipicolinate from L-aspartate: step 2/4. Its pathway is amino-acid biosynthesis; L-methionine biosynthesis via de novo pathway; L-homoserine from L-aspartate: step 2/3. It functions in the pathway amino-acid biosynthesis; L-threonine biosynthesis; L-threonine from L-aspartate: step 2/5. Its function is as follows. Catalyzes the NADPH-dependent formation of L-aspartate-semialdehyde (L-ASA) by the reductive dephosphorylation of L-aspartyl-4-phosphate. The protein is Aspartate-semialdehyde dehydrogenase of Mycolicibacterium smegmatis (Mycobacterium smegmatis).